The chain runs to 232 residues: Octanoyltransferase (232 aa).

A BPL/LPL catalytic domain is found at 40–226 (GSAPERVWLL…TWQDLFGSVP (187 aa)). Residues 79–86 (RGGQWTYH), 157–159 (ALG), and 170–172 (GVA) contribute to the substrate site. Residue cysteine 188 is the Acyl-thioester intermediate of the active site.

It belongs to the LipB family.

It is found in the cytoplasm. The catalysed reaction is octanoyl-[ACP] + L-lysyl-[protein] = N(6)-octanoyl-L-lysyl-[protein] + holo-[ACP] + H(+). It functions in the pathway protein modification; protein lipoylation via endogenous pathway; protein N(6)-(lipoyl)lysine from octanoyl-[acyl-carrier-protein]: step 1/2. Its function is as follows. Catalyzes the transfer of endogenously produced octanoic acid from octanoyl-acyl-carrier-protein onto the lipoyl domains of lipoate-dependent enzymes. Lipoyl-ACP can also act as a substrate although octanoyl-ACP is likely to be the physiological substrate. The protein is Octanoyltransferase of Gluconacetobacter diazotrophicus (strain ATCC 49037 / DSM 5601 / CCUG 37298 / CIP 103539 / LMG 7603 / PAl5).